The sequence spans 531 residues: Putative heme-binding protein HQ_1094A (531 aa).

A heme-binding site is contributed by histidine 177. The disordered stretch occupies residues 269 to 340; the sequence is AHGEAHGHAH…STNTNTQDSE (72 aa). The span at 271-281 shows a compositional bias: basic and acidic residues; that stretch reads GEAHGHAHGDS. A compositionally biased stretch (gly residues) spans 284–306; the sequence is GSGGGGGSSHGQSPGGASAGGSA. A compositionally biased stretch (basic and acidic residues) spans 308-317; that stretch reads GTEDADHSDS. The span at 318-338 shows a compositional bias: low complexity; sequence RSTTSADTTQSDTSTNTNTQD. One can recognise an ABM domain in the interval 441–529; that stretch reads GTMGMFYTVK…VLSERPRHVF (89 aa).

It in the N-terminal section; belongs to the ChdC family.

The polypeptide is Putative heme-binding protein HQ_1094A (Haloquadratum walsbyi (strain DSM 16790 / HBSQ001)).